The primary structure comprises 359 residues: MKPSIYSLTRDELIAWAVERGQKQFRATQIWDWLYKKRVQSFEEMTNISKDFVSILNDSFCVNPLKQRVVQESADGTVKYLFELPDGMLIETVLMRQHYGHSVCVTTQVGCNIGCTFCASGLIKKQRDLNSGEITAQIMLVQKYFDDRKQGERVSHVVVMGIGEPFDNYKNVMCFLRVINDDNGLAIGARHITVSTSGLAHKIRDFANEGVQVNLAVSLHAPNNDLRSRIMRVNRSFPLEKLFSAIEYYIEKTNRRVTFEYIMLNEVNDSIKQAQELADLTKTIRKLSYVNLIPYNPVSEHDQYSRSLKERVLAFYDVLKKNGVNCVVRQEHGTDIDAACGQLRSKTMKKDREKVTATK.

The Proton acceptor role is filled by Glu-91. The region spanning 97–335 (QHYGHSVCVT…CVVRQEHGTD (239 aa)) is the Radical SAM core domain. An intrachain disulfide couples Cys-104 to Cys-340. Residues Cys-111, Cys-115, and Cys-118 each coordinate [4Fe-4S] cluster. Residues 163 to 164 (GE), Ser-195, 218 to 220 (SLH), and Asn-296 each bind S-adenosyl-L-methionine. Residue Cys-340 is the S-methylcysteine intermediate of the active site.

This sequence belongs to the radical SAM superfamily. RlmN family. It depends on [4Fe-4S] cluster as a cofactor.

The protein localises to the cytoplasm. It catalyses the reaction adenosine(2503) in 23S rRNA + 2 reduced [2Fe-2S]-[ferredoxin] + 2 S-adenosyl-L-methionine = 2-methyladenosine(2503) in 23S rRNA + 5'-deoxyadenosine + L-methionine + 2 oxidized [2Fe-2S]-[ferredoxin] + S-adenosyl-L-homocysteine. It carries out the reaction adenosine(37) in tRNA + 2 reduced [2Fe-2S]-[ferredoxin] + 2 S-adenosyl-L-methionine = 2-methyladenosine(37) in tRNA + 5'-deoxyadenosine + L-methionine + 2 oxidized [2Fe-2S]-[ferredoxin] + S-adenosyl-L-homocysteine. In terms of biological role, specifically methylates position 2 of adenine 2503 in 23S rRNA and position 2 of adenine 37 in tRNAs. This Streptococcus pyogenes serotype M12 (strain MGAS2096) protein is Probable dual-specificity RNA methyltransferase RlmN.